Reading from the N-terminus, the 215-residue chain is Cytochrome b6 (215 aa).

The chain crosses the membrane as a helical span at residues 32–52 (IFYCLGGITLTCFLVQVATGF). Cys35 lines the heme c pocket. The heme b site is built by His86 and His100. 3 consecutive transmembrane segments (helical) span residues 90–110 (ASMM…TGGF), 116–136 (LTWV…VTGY), and 186–206 (LHTF…FPMI). 2 residues coordinate heme b: His187 and His202.

This sequence belongs to the cytochrome b family. PetB subfamily. As to quaternary structure, the 4 large subunits of the cytochrome b6-f complex are cytochrome b6, subunit IV (17 kDa polypeptide, PetD), cytochrome f and the Rieske protein, while the 4 small subunits are PetG, PetL, PetM and PetN. The complex functions as a dimer. Requires heme b as cofactor. Heme c serves as cofactor.

It is found in the plastid. It localises to the chloroplast thylakoid membrane. In terms of biological role, component of the cytochrome b6-f complex, which mediates electron transfer between photosystem II (PSII) and photosystem I (PSI), cyclic electron flow around PSI, and state transitions. This Agrostis stolonifera (Creeping bentgrass) protein is Cytochrome b6.